A 213-amino-acid chain; its full sequence is ATP-dependent Clp protease proteolytic subunit 1 (213 aa).

Ser-114 acts as the Nucleophile in catalysis. His-139 is a catalytic residue.

It belongs to the peptidase S14 family. In terms of assembly, fourteen ClpP subunits assemble into 2 heptameric rings which stack back to back to give a disk-like structure with a central cavity, resembling the structure of eukaryotic proteasomes.

Its subcellular location is the cytoplasm. The enzyme catalyses Hydrolysis of proteins to small peptides in the presence of ATP and magnesium. alpha-casein is the usual test substrate. In the absence of ATP, only oligopeptides shorter than five residues are hydrolyzed (such as succinyl-Leu-Tyr-|-NHMec, and Leu-Tyr-Leu-|-Tyr-Trp, in which cleavage of the -Tyr-|-Leu- and -Tyr-|-Trp bonds also occurs).. Functionally, cleaves peptides in various proteins in a process that requires ATP hydrolysis. Has a chymotrypsin-like activity. Plays a major role in the degradation of misfolded proteins. The polypeptide is ATP-dependent Clp protease proteolytic subunit 1 (Pseudomonas aeruginosa (strain ATCC 15692 / DSM 22644 / CIP 104116 / JCM 14847 / LMG 12228 / 1C / PRS 101 / PAO1)).